Consider the following 127-residue polypeptide: Large ribosomal subunit protein bL19 (127 aa).

Belongs to the bacterial ribosomal protein bL19 family.

In terms of biological role, this protein is located at the 30S-50S ribosomal subunit interface and may play a role in the structure and function of the aminoacyl-tRNA binding site. The sequence is that of Large ribosomal subunit protein bL19 from Cupriavidus pinatubonensis (strain JMP 134 / LMG 1197) (Cupriavidus necator (strain JMP 134)).